The primary structure comprises 234 residues: Proteasome subunit alpha type-6 (234 aa).

S14 bears the Phosphoserine mark. K191 is covalently cross-linked (Glycyl lysine isopeptide (Lys-Gly) (interchain with G-Cter in ubiquitin)).

The protein belongs to the peptidase T1A family. The 26S proteasome consists of a 20S proteasome core and two 19S regulatory subunits. The 20S proteasome core is composed of 28 subunits that are arranged in four stacked rings, resulting in a barrel-shaped structure. The two end rings are each formed by seven alpha subunits, and the two central rings are each formed by seven beta subunits. The catalytic chamber with the active sites is on the inside of the barrel.

The protein resides in the cytoplasm. It localises to the nucleus. Its function is as follows. The proteasome degrades poly-ubiquitinated proteins in the cytoplasm and in the nucleus. It is essential for the regulated turnover of proteins and for the removal of misfolded proteins. The proteasome is a multicatalytic proteinase complex that is characterized by its ability to cleave peptides with Arg, Phe, Tyr, Leu, and Glu adjacent to the leaving group at neutral or slightly basic pH. It has an ATP-dependent proteolytic activity. This chain is Proteasome subunit alpha type-6 (PRE5), found in Saccharomyces cerevisiae (strain ATCC 204508 / S288c) (Baker's yeast).